The following is a 652-amino-acid chain: Neuroendocrine convertase 2 (652 aa).

The N-terminal stretch at 1–22 (MKNTHVDLICVFLSIFIGIGEA) is a signal peptide. The propeptide occupies 23-107 (VDVYTNHFHV…QLKGYTRTKR (85 aa)). A Peptidase S8 domain is found at 136–481 (QWYLKNTGQA…FGVLDAAEMV (346 aa)). N-linked (GlcNAc...) asparagine glycosylation occurs at N167. Active-site charge relay system residues include D174 and H215. Disulfide bonds link C232/C382 and C324/C354. N290 carries an N-linked (GlcNAc...) asparagine glycan. The Charge relay system role is filled by S390. N451 is a glycosylation site (N-linked (GlcNAc...) asparagine). The P/Homo B domain maps to 489–625 (TSPPRYHCTA…ELMLHGTREA (137 aa)). C496 and C522 are oxidised to a cystine. A required for ubiquitination-mediated degradation region spans residues 501 to 652 (IDTPHEIPAD…TVQKAHKRSH (152 aa)). N542 carries N-linked (GlcNAc...) asparagine glycosylation.

This sequence belongs to the peptidase S8 family. Furin subfamily. As to quaternary structure, interacts (via C-terminus) with F-box protein fsn-1 (via SPRY domain); the interaction results in egl-3 proteasomal degradation. In terms of processing, ubiquitinated. In terms of tissue distribution, expressed in head and tail ganglia. Expressed in neurons including mechanosensory and motor neurons, and interneurons (at protein level). Expressed in the nerve ring, ventral nerve cord and intestine.

The protein localises to the cell projection. It is found in the axon. The protein resides in the cytoplasmic vesicle. Its subcellular location is the secretory vesicle lumen. It localises to the secreted. It carries out the reaction Release of protein hormones and neuropeptides from their precursors, generally by hydrolysis of -Lys-Arg-|- bonds.. In terms of biological role, serine endoprotease which cleaves preproteins at paired basic amino acids. Processes FMRFamide-like (flp) and neuropeptide-like protein (nlp) neuropeptides. Probably by processing flp-1 and flp-18, modulates the neuronal excitation-inhibition balance and thus the level of activity of the locomotor circuit. Regulates sensitivity to mechanosensory stimuli. By processing neuropeptides, modulates basal acetylcholine release at the ventral cord neuromuscular junctions. Probably by processing flp neuropeptides, regulates the turning step of male mating behavior. Cleaves pro-insulin-like proteins ins-3, ins-4 and ins-6 into their mature active forms. Together with convertase kpc-1, cleaves pro-insulin-like protein ins-18. By controlling ins-4 and ins-6 processing and thus the activation of the daf-2/InsR pathway, negatively modulates synapse development and synaptic transmission at neuromuscular junctions. Similarly, by controlling ins-4 and ins-6 processing, negatively regulates dauer formation under optimal environmental conditions. Under adverse environmental conditions, may promote dauer formation by processing ins-18, a daf-2/InsR antagonist. May cleave dense-core vesicle membrane protein ida-1. Involved in egg-laying, fat storage and locomotion. The sequence is that of Neuroendocrine convertase 2 from Caenorhabditis elegans.